We begin with the raw amino-acid sequence, 421 residues long: Glutamyl-tRNA reductase (421 aa).

Residues 49–52, serine 109, 114–116, and glutamine 120 each bind substrate; these read TCNR and EAQ. Cysteine 50 (nucleophile) is an active-site residue. 189–194 is a binding site for NADP(+); the sequence is GAGEMC.

The protein belongs to the glutamyl-tRNA reductase family. In terms of assembly, homodimer.

The catalysed reaction is (S)-4-amino-5-oxopentanoate + tRNA(Glu) + NADP(+) = L-glutamyl-tRNA(Glu) + NADPH + H(+). The protein operates within porphyrin-containing compound metabolism; protoporphyrin-IX biosynthesis; 5-aminolevulinate from L-glutamyl-tRNA(Glu): step 1/2. In terms of biological role, catalyzes the NADPH-dependent reduction of glutamyl-tRNA(Glu) to glutamate 1-semialdehyde (GSA). This is Glutamyl-tRNA reductase from Magnetococcus marinus (strain ATCC BAA-1437 / JCM 17883 / MC-1).